The chain runs to 397 residues: 3-ketoacyl-CoA thiolase, mitochondrial (397 aa).

A mitochondrion; not cleaved-targeting transit peptide spans 1-16 (MALLRGVFVVAAKRTP). At lysine 25 the chain carries N6-acetyllysine; alternate. Lysine 25 is modified (N6-succinyllysine; alternate). Lysine 45 bears the N6-succinyllysine mark. Cysteine 92 acts as the Acyl-thioester intermediate in catalysis. A Phosphothreonine modification is found at threonine 119. Serine 121 carries the phosphoserine modification. A Phosphotyrosine modification is found at tyrosine 127. A Phosphothreonine modification is found at threonine 136. Lysine 137 is modified (N6-acetyllysine; alternate). Lysine 137 is modified (N6-succinyllysine; alternate). Serine 140 carries the phosphoserine modification. An N6-acetyllysine; alternate mark is found at lysine 143, lysine 171, lysine 191, and lysine 209. N6-succinyllysine; alternate is present on residues lysine 143, lysine 171, lysine 191, and lysine 209. 3 positions are modified to N6-succinyllysine: lysine 211, lysine 212, and lysine 214. CoA-binding residues include arginine 224 and threonine 227. Lysine 234 carries the post-translational modification N6-acetyllysine; alternate. Lysine 234 is modified (N6-succinyllysine; alternate). Residue lysine 240 is modified to N6-succinyllysine. An N6-acetyllysine modification is found at lysine 241. Serine 251 is a CoA binding site. N6-acetyllysine is present on residues lysine 269 and lysine 270. Residue lysine 305 is modified to N6-acetyllysine; alternate. Position 305 is an N6-succinyllysine; alternate (lysine 305). Serine 310 is subject to Phosphoserine. Lysine 312 carries the N6-acetyllysine; alternate modification. Lysine 312 is modified (N6-succinyllysine; alternate). At serine 333 the chain carries Phosphoserine. N6-acetyllysine occurs at positions 340 and 375. Residue cysteine 382 is the Proton donor/acceptor of the active site.

This sequence belongs to the thiolase-like superfamily. Thiolase family. In terms of assembly, homotetramer. Interacts with BNIP3.

It localises to the mitochondrion. It carries out the reaction an acyl-CoA + acetyl-CoA = a 3-oxoacyl-CoA + CoA. It catalyses the reaction 2 acetyl-CoA = acetoacetyl-CoA + CoA. The catalysed reaction is acetyl-CoA + H2O = acetate + CoA + H(+). The enzyme catalyses propanoyl-CoA + H2O = propanoate + CoA + H(+). It carries out the reaction butanoyl-CoA + H2O = butanoate + CoA + H(+). It catalyses the reaction hexanoyl-CoA + H2O = hexanoate + CoA + H(+). The catalysed reaction is octanoyl-CoA + H2O = octanoate + CoA + H(+). The enzyme catalyses decanoyl-CoA + H2O = decanoate + CoA + H(+). It carries out the reaction dodecanoyl-CoA + H2O = dodecanoate + CoA + H(+). It catalyses the reaction tetradecanoyl-CoA + H2O = tetradecanoate + CoA + H(+). The catalysed reaction is hexadecanoyl-CoA + H2O = hexadecanoate + CoA + H(+). It participates in lipid metabolism; fatty acid beta-oxidation. In the production of energy from fats, this is one of the enzymes that catalyzes the last step of the mitochondrial beta-oxidation pathway, an aerobic process breaking down fatty acids into acetyl-CoA. Using free coenzyme A/CoA, catalyzes the thiolytic cleavage of medium- to long-chain unbranched 3-oxoacyl-CoAs into acetyl-CoA and a fatty acyl-CoA shortened by two carbon atoms. Also catalyzes the condensation of two acetyl-CoA molecules into acetoacetyl-CoA and could be involved in the production of ketone bodies. Also displays hydrolase activity on various fatty acyl-CoAs. Thereby, could be responsible for the production of acetate in a side reaction to beta-oxidation. Abolishes BNIP3-mediated apoptosis and mitochondrial damage. This Pongo abelii (Sumatran orangutan) protein is 3-ketoacyl-CoA thiolase, mitochondrial (ACAA2).